The following is a 113-amino-acid chain: Endoribonuclease SymE (113 aa).

Residues 29–74 (SRYPDYSRIPAITLKGQWLEAAGFATGTAVDVKVMEGCIVLTAQPP) enclose the SpoVT-AbrB domain.

The protein belongs to the SymE family.

The protein resides in the cytoplasm. In terms of biological role, involved in the degradation and recycling of damaged RNA. It is itself a target for degradation by the ATP-dependent protease Lon. The sequence is that of Endoribonuclease SymE from Escherichia coli O6:K15:H31 (strain 536 / UPEC).